Here is a 155-residue protein sequence, read N- to C-terminus: Ribosome maturation factor RimP (155 aa).

Belongs to the RimP family.

The protein localises to the cytoplasm. Its function is as follows. Required for maturation of 30S ribosomal subunits. This chain is Ribosome maturation factor RimP, found in Staphylococcus haemolyticus (strain JCSC1435).